Consider the following 255-residue polypeptide: MDLIIASRMDEASMLMAEKIIDLYDFNRLNENEYQKDGFKLMFIDDLHIYHNMEKLDFDTLIFLSRHSSSAGVKSLTVHSIGNYRKAELGGYDNKTVLSAPYEMSSSLRSIKELYNDDGYNITFEATHHGPYTKNRSYFIEIGTSGEDWHNDKILEIMARSVIEKNVKRFRSGIGIGGGHYAPKISDYFFNNDINIGHIIPKYVSETIKDNQIIESIENTENCSFILIDWKGSPSRLRSLALDAADKCSLELIKI.

Belongs to the DtdA deacylase family. As to quaternary structure, monomer. Zn(2+) is required as a cofactor.

It carries out the reaction a D-aminoacyl-tRNA + H2O = a tRNA + a D-alpha-amino acid + H(+). It catalyses the reaction glycyl-tRNA(Ala) + H2O = tRNA(Ala) + glycine + H(+). Its function is as follows. D-aminoacyl-tRNA deacylase with broad substrate specificity. By recycling D-aminoacyl-tRNA to D-amino acids and free tRNA molecules, this enzyme counteracts the toxicity associated with the formation of D-aminoacyl-tRNA entities in vivo. In Picrophilus torridus (strain ATCC 700027 / DSM 9790 / JCM 10055 / NBRC 100828 / KAW 2/3), this protein is D-aminoacyl-tRNA deacylase.